A 283-amino-acid chain; its full sequence is Cilia- and flagella-associated protein 77 (283 aa).

Residues 151–170 (DQEDRRQKEPPPIPPNMTFG) are disordered.

The protein belongs to the CFAP77 family. As to quaternary structure, microtubule inner protein component of sperm flagellar doublet microtubules.

The protein resides in the cytoplasm. Its subcellular location is the cytoskeleton. It is found in the cilium axoneme. It localises to the flagellum axoneme. In terms of biological role, microtubule inner protein (MIP) part of the dynein-decorated doublet microtubules (DMTs) in cilia axoneme, which is required for motile cilia beating. The chain is Cilia- and flagella-associated protein 77 from Mus musculus (Mouse).